The following is a 1870-amino-acid chain: Non-reducing polyketide synthase pkgA (1870 aa).

The interval 40–279 is N-terminal acylcarrier protein transacylase domain (SAT); the sequence is IQDLIRRLHR…SRHSALPISG (240 aa). Positions 416 to 838 constitute a Ketosynthase family 3 (KS3) domain; the sequence is DAKLAVVGMA…GGNTTLLLED (423 aa). Positions 453-492 are disordered; sequence PPDRFDLDAHFDPSGEKENTTTKGSQSNRPLSRQAEQTDP. The span at 455-472 shows a compositional bias: basic and acidic residues; it reads DRFDLDAHFDPSGEKENT. Over residues 473–492 the composition is skewed to polar residues; sequence TTKGSQSNRPLSRQAEQTDP. Active-site for beta-ketoacyl synthase activity residues include C577, H712, and H755. A malonyl-CoA:ACP transacylase (MAT) domain region spans residues 947 to 1282; that stretch reads AFSGQGCLYH…QSFASLRRGD (336 aa). The interval 1004 to 1027 is disordered; it reads RCPHRESTPSSDASHDSNTNRTST. Residues 1011 to 1027 show a composition bias toward polar residues; sequence TPSSDASHDSNTNRTST. Positions 1364–1704 are product template (PT) domain; the sequence is TSSVQQIIFE…PRALMPVLFP (341 aa). The N-terminal hotdog fold stretch occupies residues 1368-1502; that stretch reads QQIIFEEYDE…ATVCYEEAQD (135 aa). Positions 1368 to 1700 constitute a PKS/mFAS DH domain; that stretch reads QQIIFEEYDE…FKAVPRALMP (333 aa). Residue H1400 is the Proton acceptor; for dehydratase activity of the active site. A C-terminal hotdog fold region spans residues 1538 to 1700; the sequence is KGGPRVNNFF…FKAVPRALMP (163 aa). The active-site Proton donor; for dehydratase activity is the D1602. Residues 1795–1870 enclose the Carrier domain; sequence QSQNAQATAC…VQDLVTWLSK (76 aa). S1832 carries the O-(pantetheine 4'-phosphoryl)serine modification.

The cofactor is pantetheine 4'-phosphate.

It catalyses the reaction holo-[ACP] + 6 malonyl-CoA + acetyl-CoA + 6 H(+) = 3,5,7,9,11,13-hexaoxotetradecanoyl-[ACP] + 6 CO2 + 7 CoA. The enzyme catalyses holo-[ACP] + 5 malonyl-CoA + acetyl-CoA + 5 H(+) = 3,5,7,9,11-pentaoxododecanoyl-[ACP] + 5 CO2 + 6 CoA. It participates in secondary metabolite biosynthesis. Functionally, non-reducing polyketide synthase; part of the pkg gene cluster that mediates the biosynthesis of dihydrocitreoisocoumarin and 6,8-dihydroxy-3-(2-oxopropyl)-isocoumarin. The non-reducing polyketide synthase pkgA performs the condensation of one acetyl-CoA starter unit with 6 and 5 malonyl-CoA units, respectively. As pkgA lacks a releasing domain, the thioesterase pkgB is necessary to break the thioester bond and release dihydrocitreoisocoumarin and 6,8-dihydroxy-3-(2-oxopropyl)-isocoumarin from pkgA. This chain is Non-reducing polyketide synthase pkgA, found in Emericella nidulans (strain FGSC A4 / ATCC 38163 / CBS 112.46 / NRRL 194 / M139) (Aspergillus nidulans).